A 288-amino-acid chain; its full sequence is NAD(P)H-hydrate epimerase (288 aa).

The N-terminal 48 residues, 1-48 (MSALRALLGLGLLAAGSRLRRVPGRAGACPAGSAWWEARRPHSGGGGE), are a transit peptide targeting the mitochondrion. The region spanning 65–275 (AQAVDEELFN…ALEKKYQLNL (211 aa)) is the YjeF N-terminal domain. 119–123 (NNGGD) contributes to the (6S)-NADPHX binding site. A K(+)-binding site is contributed by N120. The residue at position 144 (K144) is an N6-succinyllysine. D185 contacts K(+). (6S)-NADPHX contacts are provided by residues 189–195 (GFSFKGD) and D218. S221 is a K(+) binding site.

This sequence belongs to the NnrE/AIBP family. Homodimer. Interacts with APOA1 and APOA2. K(+) serves as cofactor. Undergoes physiological phosphorylation during sperm capacitation, downstream to PKA activation.

The protein resides in the mitochondrion. It is found in the secreted. It carries out the reaction (6R)-NADHX = (6S)-NADHX. It catalyses the reaction (6R)-NADPHX = (6S)-NADPHX. In terms of biological role, catalyzes the epimerization of the S- and R-forms of NAD(P)HX, a damaged form of NAD(P)H that is a result of enzymatic or heat-dependent hydration. This is a prerequisite for the S-specific NAD(P)H-hydrate dehydratase to allow the repair of both epimers of NAD(P)HX. Accelerates cholesterol efflux from endothelial cells to high-density lipoprotein (HDL) and thereby regulates angiogenesis. The chain is NAD(P)H-hydrate epimerase from Canis lupus familiaris (Dog).